We begin with the raw amino-acid sequence, 213 residues long: MTIRHHVSDALLTAYAAGTLSEAFSLVVATHLSLCDECRARAGALDAVGGSLMEETAPVALSEGSLASVMAQLDRQIQRPAPARRADPRAPAPLADYVGRRLEDVRWRTLGGGVRQAILPTGGEAIARLLWIPGGQAVPDHGHRGLELTLVLQGAFRDETDRFGAGDIEIADQELEHTPVAERGLDCICLAATDAPLRFNSFLPKLVQPFFRI.

A sufficient to bind sigma factor and inhibit its activity region spans residues 2–85; that stretch reads TIRHHVSDAL…QIQRPAPARR (84 aa). The Zn(2+) site is built by His-6, His-31, Cys-35, Cys-38, His-141, His-143, Glu-147, and His-177. Positions 86–194 are required for response to singlet oxygen; sequence ADPRAPAPLA…LDCICLAATD (109 aa).

The protein belongs to the zinc-associated anti-sigma factor (ZAS) superfamily. Forms a 1:1 complex with cognate ECF RNA polymerase sigma factor RpoE; this inhibits the interaction of RpoE with the RNA polymerase catalytic core. The cofactor is Zn(2+).

Anti-sigma factor that inhibits the activity of the extracytoplasmic function (ECF) sigma-E factor (RpoE), thereby indirectly regulating the transcription of the cycA and rpoE genes. ECF sigma factors are held in an inactive form by a cognate anti-sigma factor. The polypeptide is Anti-sigma-E factor ChrR (chrR) (Cereibacter sphaeroides (strain ATCC 17023 / DSM 158 / JCM 6121 / CCUG 31486 / LMG 2827 / NBRC 12203 / NCIMB 8253 / ATH 2.4.1.) (Rhodobacter sphaeroides)).